The primary structure comprises 7059 residues: Replicase polyprotein 1ab (7059 aa).

In terms of domain architecture, CoV Nsp1 globular spans 54 to 196; that stretch reads PENHVMVDCR…PWVMYLRKCG (143 aa). A BetaCoV Nsp1 C-terminal domain is found at 216–246; the sequence is FKVEDAYDLVHDEPKGKFSKKAYALIRGYRG. The CoV Nsp2 N-terminal domain occupies 250–519; sequence LLYVDQYGCD…LICKALYLDY (270 aa). Residues Cys392, Cys397, Cys413, and Cys416 each coordinate Zn(2+). Residues 392–416 are C4; the sequence is CEQDLCDFKGWVPGNMIDGFACTTC. One can recognise a CoV Nsp2 middle domain in the interval 524 to 713; sequence CGNLHQRELL…AQAFRSGAKV (190 aa). Residues 733–851 enclose the CoV Nsp2 C-terminal domain; sequence RRRICLSGSK…LDQAWRVPCA (119 aa). A Ubiquitin-like 1 domain is found at 853–966; sequence RCVTFKEQPT…LYCAFTAPED (114 aa). Positions 972 to 986 are enriched in acidic residues; the sequence is ESGVEEDDVEGEETD. The tract at residues 972 to 1000 is disordered; sequence ESGVEEDDVEGEETDLTVTSAGEPCVASE. The region spanning 1036 to 1274 is the Peptidase C16 1 domain; that stretch reads DLESVIQDYE…IAQLYGSCIT (239 aa). The For PL1-PRO activity role is filled by Cys1074. Residues Cys1151, Cys1154, Cys1177, and Cys1179 each contribute to the Zn(2+) site. The C4-type 1 zinc-finger motif lies at 1151 to 1179; the sequence is CIKCDLALKLKGLDAMFFYGDVVSHVCKC. Catalysis depends on for PL1-PRO activity residues His1225 and Asp1236. Residues 1275–1435 form the Macro domain; the sequence is PNVCFVKGDI…LISKCQITAV (161 aa). The DPUP domain maps to 1491-1563; sequence DDARTFVQSN…VAQIKALFLD (73 aa). A Ubiquitin-like 2 domain is found at 1562–1617; that stretch reads LDKVDILLTVDGVNFTNRFVPVGESFGKSLGNVFCDGVNVTKHKCDINYKGKVFFQ. One can recognise a Peptidase C16 2 domain in the interval 1631 to 1892; sequence SSFNFDQKEL…KIEYKPDLSQ (262 aa). The For PL2-PRO activity role is filled by Cys1671. Residues Cys1749, Cys1751, Cys1783, and Cys1785 each coordinate Zn(2+). The segment at 1749–1785 adopts a C4-type 2 zinc-finger fold; the sequence is CKCGVKQEQRTGVDAVMHFGTLSREDLEIGYTVDCSC. Catalysis depends on for PL2-PRO activity residues His1828 and Asp1842. A Nucleic acid-binding domain is found at 1906–2007; the sequence is IKAQFKTFEK…TYFNRPLLVD (102 aa). The G2M domain occupies 2020 to 2169; it reads DDGGDISESD…ADNKVIYTTE (150 aa). The next 3 membrane-spanning stretches (helical) occupy residues 2138–2158, 2199–2219, and 2221–2241; these read ISACFNFIKWLFVLLFGWIKI, ACIIATIFLLWFNFIYANVIF, and DFYLPKIGFLPTFVGKIVQWI. The HD1 stretch occupies residues 2138 to 2385; it reads ISACFNFIKW…ASFIKLFSLF (248 aa). In terms of domain architecture, 3Ecto spans 2235–2296; the sequence is GKIVQWIKNT…AIDVVQYEAD (62 aa). Intrachain disulfides connect Cys2251/Cys2275 and Cys2266/Cys2272. The next 3 membrane-spanning stretches (helical) occupy residues 2313-2333, 2343-2363, and 2365-2385; these read LIVSYALYTAWFYPLFALISI, LLMLSTLHWSVRLLVSLANML, and AHVFMRFYIIIASFIKLFSLF. The Y1 stretch occupies residues 2383–2473; the sequence is SLFRHVAYGC…ELKRPIQPTD (91 aa). Positions 2383–2750 constitute a CoV Nsp3 Y domain; the sequence is SLFRHVAYGC…LTTPFSLKGG (368 aa). Residues His2387, Cys2392, Cys2397, Cys2400, Cys2433, His2436, Cys2440, and Cys2443 each contribute to the Zn(2+) site. The tract at residues 2387–2400 is ZF1; the sequence is HVAYGCSKSGCLFC. Residues 2433 to 2443 form a ZF2 region; the sequence is CSKHQWNCIDC. The Y2 stretch occupies residues 2474 to 2566; that stretch reads VAYHTVTDVK…MVDKILITTA (93 aa). The coV-Y stretch occupies residues 2474–2750; that stretch reads VAYHTVTDVK…LTTPFSLKGG (277 aa). The tract at residues 2567 to 2649 is Y3; sequence NTGTSVTETM…DSVMSAVSAG (83 aa). Positions 2650 to 2750 are Y4; sequence LELTDESCNN…LTTPFSLKGG (101 aa). The next 7 helical transmembrane spans lie at 2752-2772, 2824-2844, 3009-3029, 3031-3051, 3063-3083, 3090-3110, and 3115-3135; these read VFSYFVYVCFVLSLVCFIGLW, STFGLSYYSNSMACPIVVAVV, VFDLIYQLFKGLAQPVDFLAL, ASSIAGAILAVIVVLGFYYLI, IVFVNVIVWCVNFMMLFVFQV, VYAICYFYATLYFPSEISVIM, and LVMYGTIMPLWFCLLYISVVV. The HD2 stretch occupies residues 2752-3135; it reads VFSYFVYVCF…FCLLYISVVV (384 aa). The Nsp4C domain maps to 3149-3246; that stretch reads LGTSVRSDGT…TASVSTSFLQ (98 aa). One can recognise a Peptidase C30 domain in the interval 3247–3549; it reads SGIVKMVNPT…YQQLAGIKLQ (303 aa). Active-site for 3CL-PRO activity residues include His3287 and Cys3391. Positions 3319 to 3775 are HD3; sequence LSLTVMSYQM…IISCYWGLFS (457 aa). 7 helical membrane-spanning segments follow: residues 3558-3578, 3588-3608, 3615-3635, 3657-3677, 3684-3704, 3711-3731, and 3755-3775; these read GIVCWIMASTFLFSCIITAFV, TNMLSITFCALCVISLAMLLV, LTMYIIPVLFTLLYNNYLVVY, TYTDEVIYGMLLLIGMVFVTL, LFSFIMFVGRVISVVSLWYMG, ILLMLASLFGTYTWTTALSMA, and IVLVCYLFIGYIISCYWGLFS. The RdRp Nsp7 cofactor domain occupies 3837–3925; that stretch reads SKLTDVKCAN…DYAKDNTVLQ (89 aa). A RdRp Nsp8 cofactor domain is found at 3926 to 4122; sequence ALQSEFVNMA…HNEVSATVLQ (197 aa). A Nsp9 ssRNA-binding domain is found at 4123–4232; that stretch reads NNELMPAKLK…GTISSTVRLQ (110 aa). The region spanning 4233–4370 is the ExoN/MTase coactivator domain; that stretch reads AGTATEYASN…CVSTDTTVQS (138 aa). The Zn(2+) site is built by Cys4306, Cys4309, His4315, Cys4322, Cys4348, Cys4351, Cys4359, and Cys4361. 2 zinc fingers span residues 4306-4322 and 4348-4361; these read CIYCRARVEHPDVDGLC and CQVCGFWRDGSCSC. In terms of domain architecture, NiRAN spans 4375 to 4630; it reads FLNRVRGTSV…DCELYVNNAY (256 aa). Positions 4578 and 4587 each coordinate Mn(2+). One can recognise a Nsp12 Interface domain in the interval 4631–4729; sequence RLFDLVQYDF…MNMDVDTHRY (99 aa). Residues His4660, Cys4666, Cys4671, Cys4675, and Cys4852 each contribute to the Zn(2+) site. Residues 4730–5297 enclose the Nsp12 RNA-dependent RNA polymerase domain; that stretch reads RLSLKDLLLY…NMYLRSAVMQ (568 aa). Positions 4732-4946 are rdRp Fingers N-ter; the sequence is SLKDLLLYAA…HQKCLKSIAA (215 aa). Residues 4947–4985 form a rdRp Palm N-ter region; sequence TRGVPVVIGTTKFYGGWDDMLRRLIKDVDNPVLMGWDYP. Positions 4977–5139 constitute a RdRp catalytic domain; that stretch reads PVLMGWDYPK…CYNSDYASKG (163 aa). The segment at 4986-5044 is rdRp Fingers C-ter; that stretch reads KCDRAMPNILRIVSSLVLARKHEACCSQSDRFYRLANECAQVLSEIVMCGGCYYVKPGG. The Zn(2+) site is built by His5007, Cys5010, and Cys5011. The interval 5045–5180 is rdRp Palm C-ter; it reads TSSGDATTAF…NNGPHEFCSQ (136 aa). Residues Ser5124, Asp5125, and Asp5126 contribute to the active site. Residues 5181–5297 form a rdRp Thumb region; the sequence is HTMLVKMDGD…NMYLRSAVMQ (117 aa). One can recognise a CV ZBD domain in the interval 5298-5410; that stretch reads SVGACVVCSS…DDFNRIASCK (113 aa). Residues Cys5302, Cys5305, Cys5313, Cys5316, Cys5323, Cys5326, His5330, His5336, Cys5347, Cys5352, Cys5369, and His5372 each contribute to the Zn(2+) site. Residues 5553 to 5734 form the (+)RNA virus helicase ATP-binding domain; sequence SVLETFQNNV…MCCLGPDIFL (182 aa). 5578 to 5585 is an ATP binding site; sequence GPPGTGKS. Residues 5735–5904 enclose the (+)RNA virus helicase C-terminal domain; that stretch reads GTCYRCPKEI…VETRVQCSTN (170 aa). The ExoN domain occupies 5971–6186; it reads LFITKEEAVK…RCLAVYDCFC (216 aa). Catalysis depends on residues Asp5989, Glu5991, and Glu6090. Zn(2+)-binding residues include His6156, Cys6160, and His6163. Catalysis depends on residues His6167 and Asp6172. Residue Cys6178 coordinates Zn(2+). An N7-MTase domain is found at 6195-6421; sequence YPIISNELSI…NLWNTFTKLQ (227 aa). 6230–6236 provides a ligand contact to S-adenosyl-L-methionine; that stretch reads DIGNPKA. The segment at 6308–6322 is gpppA-binding; sequence CNGGSLYVNKHAFHT. Positions 6346, 6367, 6378, and 6381 each coordinate Zn(2+). The Nsp15 N-terminal oligomerization domain maps to 6422-6482; the sequence is SLENVVYNLV…NVAVELFAKR (61 aa). Positions 6483-6603 constitute an AV-Nsp11N/CoV-Nsp15M domain; that stretch reads SIRHHPELKL…FAVRKEGQDV (121 aa). A NendoU domain is found at 6653–6792; that stretch reads TCRTDMEKDF…NDEKVMTFYP (140 aa). Active-site residues include His6683, His6698, Lys6738, Lys6841, Asp6935, Lys6971, and Glu7004. The 263-residue stretch at 6797–7059 folds into the Nidovirus-type SAM-dependent 2'-O-MTase domain; that stretch reads ASDWKPGYSM…NSRLSWLVMP (263 aa).

The protein belongs to the coronaviruses polyprotein 1ab family. Interacts with host PHB and PHB2. In terms of assembly, interacts with papain-like protease nsp3 and non-structural protein 6. As to quaternary structure, monomer. Homodimer. Only the homodimer shows catalytic activity. Interacts with nsp8 and nsp12 to form the replication-transcription complex (RTC): nsp12, nsp7, two subunits of nsp8, and up to two subunits of nsp13. In terms of assembly, interacts with nsp7, nsp13 and nsp12 to form the replication-transcription complex (RTC): nsp12, nsp7, two subunits of nsp8, and up to two subunits of nsp13. As to quaternary structure, interacts with nsp12. Interacts with proofreading exoribonuclease nsp14 and 2'-O-methyltransferase nsp16; these interactions enhance nsp14 and nsp16 enzymatic activities. In terms of assembly, interacts with nsp7 and nsp8 to form the replication-transcription complex (RTC): nsp12, nsp7, two subunits of nsp8, and up to two subunits of nsp13. Interacts with nsp9. As to quaternary structure, interacts with nsp8 to form the replication-transcription complex (RTC): nsp12, nsp7, two subunits of nsp8, and up to two subunits of nsp13. Mn(2+) serves as cofactor. The cofactor is Mg(2+). Specific enzymatic cleavages in vivo by its own proteases yield mature proteins. 3CL-PRO and PL-PRO proteinases are autocatalytically processed.

Its subcellular location is the host membrane. It is found in the host cytoplasm. The protein localises to the host perinuclear region. It localises to the host endoplasmic reticulum-Golgi intermediate compartment. The catalysed reaction is RNA(n) + a ribonucleoside 5'-triphosphate = RNA(n+1) + diphosphate. The enzyme catalyses ATP + H2O = ADP + phosphate + H(+). It catalyses the reaction Thiol-dependent hydrolysis of ester, thioester, amide, peptide and isopeptide bonds formed by the C-terminal Gly of ubiquitin (a 76-residue protein attached to proteins as an intracellular targeting signal).. It carries out the reaction a 5'-end (N(7)-methyl 5'-triphosphoguanosine)-ribonucleoside in mRNA + S-adenosyl-L-methionine = a 5'-end (N(7)-methyl 5'-triphosphoguanosine)-(2'-O-methyl-ribonucleoside) in mRNA + S-adenosyl-L-homocysteine + H(+). The catalysed reaction is uridylyl-uridylyl-ribonucleotide-RNA = a 3'-end uridylyl-2',3'-cyclophospho-uridine-RNA + a 5'-end dephospho-ribonucleoside-RNA. The enzyme catalyses a 5'-end diphospho-ribonucleoside in mRNA + GTP + H(+) = a 5'-end (5'-triphosphoguanosine)-ribonucleoside in mRNA + diphosphate. It catalyses the reaction a 5'-end (5'-triphosphoguanosine)-ribonucleoside in mRNA + S-adenosyl-L-methionine = a 5'-end (N(7)-methyl 5'-triphosphoguanosine)-ribonucleoside in mRNA + S-adenosyl-L-homocysteine. Its function is as follows. The replicase polyprotein of coronaviruses is a multifunctional protein: it contains the activities necessary for the transcription of negative stranded RNA, leader RNA, subgenomic mRNAs and progeny virion RNA as well as proteinases responsible for the cleavage of the polyprotein into functional products. In terms of biological role, inhibits host translation by interacting with the 40S ribosomal subunit. The nsp1-40S ribosome complex further induces an endonucleolytic cleavage near the 5'UTR of host mRNAs, targeting them for degradation. Viral mRNAs are not susceptible to nsp1-mediated endonucleolytic RNA cleavage thanks to the presence of a 5'-end leader sequence and are therefore protected from degradation. By suppressing host gene expression, nsp1 facilitates efficient viral gene expression in infected cells and evasion from host immune response. May play a role in the modulation of host cell survival signaling pathway by interacting with host PHB and PHB2. Indeed, these two proteins play a role in maintaining the functional integrity of the mitochondria and protecting cells from various stresses. Functionally, responsible for the cleavages located at the N-terminus of the replicase polyprotein. In addition, PL-PRO possesses a deubiquitinating/deISGylating activity and processes both 'Lys-48'- and 'Lys-63'-linked polyubiquitin chains from cellular substrates. Participates together with nsp4 in the assembly of virally-induced cytoplasmic double-membrane vesicles necessary for viral replication. Antagonizes innate immune induction of type I interferon by blocking the phosphorylation, dimerization and subsequent nuclear translocation of host IRF3. Also prevents host NF-kappa-B signaling. Its function is as follows. Participates in the assembly of virally-induced cytoplasmic double-membrane vesicles necessary for viral replication. In terms of biological role, cleaves the C-terminus of replicase polyprotein at 11 sites. Recognizes substrates containing the core sequence [ILMVF]-Q-|-[SGACN]. Also able to bind an ADP-ribose-1''-phosphate (ADRP). Plays a role in the initial induction of autophagosomes from host endoplasmic reticulum. Later, limits the expansion of these phagosomes that are no longer able to deliver viral components to lysosomes. Functionally, forms a hexadecamer with nsp8 (8 subunits of each) that may participate in viral replication by acting as a primase. Alternatively, may synthesize substantially longer products than oligonucleotide primers. Its function is as follows. Forms a hexadecamer with nsp7 (8 subunits of each) that may participate in viral replication by acting as a primase. Alternatively, may synthesize substantially longer products than oligonucleotide primers. In terms of biological role, forms a primer, NSP9-pU, which is utilized by the polymerase for the initiation of RNA chains. Interacts with ribosome signal recognition particle RNA (SRP). Together with NSP8, suppress protein integration into the cell membrane, thereby disrupting host immune defenses. Plays a pivotal role in viral transcription by stimulating both nsp14 3'-5' exoribonuclease and nsp16 2'-O-methyltransferase activities. Therefore plays an essential role in viral mRNAs cap methylation. Functionally, RNA-directed RNA polymerase that catalyzes the transcription of viral genomic and subgenomic RNAs. Acts in complex with nsp7 and nsp8 to transcribe both the minus and positive strands of genomic RNA. The kinase-like NiRAN domain of NSP12 attaches one or more nucleotides to the amino terminus of NSP9, forming a covalent RNA-protein intermediate that serves as transcription/replication primer. Subgenomic RNAs (sgRNAs) are formed by discontinuous transcription: The polymerase has the ability to pause at transcription-regulating sequences (TRS) and jump to the leader TRS, resulting in a major deletion. This creates a series of subgenomic RNAs that are replicated, transcribed and translated. In addition, Nsp12 is a subunit of the viral RNA capping enzyme that catalyzes the RNA guanylyltransferase reaction for genomic and sub-genomic RNAs. Subsequently, the NiRAN domain transfers RNA to GDP, and forms the core cap structure GpppA-RNA. Its function is as follows. Multi-functional protein with a zinc-binding domain in N-terminus displaying RNA and DNA duplex-unwinding activities with 5' to 3' polarity. Activity of helicase is dependent on magnesium. In terms of biological role, plays a role in viral RNA synthesis through two distinct activities. The N7-guanine methyltransferase activity plays a role in the formation of the cap structure GpppA-RNA. The proofreading exoribonuclease reduces the sensitivity of the virus to RNA mutagens during replication. This activity acts on both ssRNA and dsRNA in a 3'-5' direction. Plays a role in viral transcription/replication and prevents the simultaneous activation of host cell dsRNA sensors, such as MDA5/IFIH1, OAS, and PKR. Acts by degrading the 5'-polyuridines generated during replication of the poly(A) region of viral genomic and subgenomic RNAs. Catalyzes a two-step reaction in which a 2'3'-cyclic phosphate (2'3'-cP) is first generated by 2'-O transesterification, which is then hydrolyzed to a 3'-phosphate (3'-P). If not degraded, poly(U) RNA would hybridize with poly(A) RNA tails and activate host dsRNA sensors. Functionally, methyltransferase that mediates mRNA cap 2'-O-ribose methylation to the 5'-cap structure of viral mRNAs. N7-methyl guanosine cap is a prerequisite for binding of nsp16. Therefore plays an essential role in viral mRNAs cap methylation which is essential to evade immune system. The sequence is that of Replicase polyprotein 1ab (rep) from Bos taurus (Bovine).